The chain runs to 410 residues: uncharacterized protein (410 aa).

Residue 11-39 (VLVIGGGPSGTALSAELAARGLDVQQLAP) participates in NAD(+) binding.

The protein belongs to the lycopene cyclase family.

This is an uncharacterized protein from Deinococcus radiodurans (strain ATCC 13939 / DSM 20539 / JCM 16871 / CCUG 27074 / LMG 4051 / NBRC 15346 / NCIMB 9279 / VKM B-1422 / R1).